The primary structure comprises 681 residues: Cryptochrome-1 (681 aa).

The segment at 1 to 489 (MSGSVSGCGS…AKARLHEALS (489 aa)) is CNT1, binds chromophores to sense blue light and mediate CRY dimerization. The 130-residue stretch at 12–141 (GCSIVWFRRD…AVRSFNADLL (130 aa)) folds into the Photolyase/cryptochrome alpha/beta domain. Cysteine 80 and cysteine 190 are joined by a disulfide. Tyrosine 235 contributes to the FAD binding site. A Mg(2+)-binding site is contributed by asparagine 238. Position 239 (arginine 239) interacts with ATP. Lysine 241, serine 244, and threonine 246 together coordinate Mg(2+). FAD contacts are provided by residues 247 to 251 (TSFLS) and serine 293. Histidine 358 lines the Mg(2+) pocket. Residues aspartate 359 and 390–392 (DAD) contribute to the FAD site. Position 359–360 (359–360 (DR)) interacts with ATP. Aspartate 409 is a binding site for ATP. Positions 490–681 (QMWQLEAASR…LNWRRLSQTG (192 aa)) are CCT1/CCE1, mediates blue light signaling. 2 disordered regions span residues 525–598 (RDIT…EPAS) and 616–664 (STED…TSSY). The span at 583–598 (MVNTNQAQQRRAEPAS) shows a compositional bias: polar residues. Serine 616 carries the post-translational modification Phosphoserine. Threonine 621 carries the phosphothreonine modification.

This sequence belongs to the DNA photolyase class-1 family. As to quaternary structure, homodimer. Interacts with ADO1, COP1 and PHYA. Interacts specifically with the dark/far-red (Pr) state of PHYB, but not with the red light-activated (Pfr). Interacts with PIF4 and PIF5 in the nucleus in response to low blue light (LBL). Binds to SPA1 and SPA4 in response to blue light, this interaction prevents SPA1/COP1 complex formation and thus avoid COP1-dependent degradation of the transcription factor HY5 by the proteasome and promotes hypocotyl elongation. Interacts with TCP2. Binding to ATP mediates conformational changes which facilitate flavin binding. Requires FAD as cofactor. (6R)-5,10-methylene-5,6,7,8-tetrahydrofolate is required as a cofactor. Autophosphorylated; in response to blue light and when in complex with FAD cofactor. Kinase activity is optimal in the presence of magnesium ions, about 30 percent of the optimal activity in the presence of manganese ions, but inactive with calcium ions. Adopts an open conformation when phosphorylated upon photoexcitation and thus interacts with signaling partner proteins. In terms of tissue distribution, widely expressed. Expressed in the aerial tissues (e.g. cotyledons and leaf primordia), but not detected in the roots.

Its subcellular location is the cytoplasm. The protein localises to the nucleus. It is found in the PML body. With respect to regulation, light exposure induces a conformational change in the C-terminal domain CCT1 required for activity. Its function is as follows. Photoreceptor that mediates primarily blue light inhibition of hypocotyl elongation and photoperiodic control of floral initiation, and regulates other light responses, including circadian rhythms, tropic growth, stomata opening, guard cell development, root development, bacterial and viral pathogen responses, abiotic stress responses, cell cycles, programmed cell death, apical dominance, fruit and ovule development, seed dormancy, and magnetoreception. Photoexcited cryptochromes interact with signaling partner proteins to alter gene expression at both transcriptional and post-translational levels and, consequently, regulate the corresponding metabolic and developmental programs. Blue-light absorbing flavoprotein that activates reversible flavin photoreduction via an electron transport chain comprising a tryptophan triad (W-324, W-377 and W-400), accompanied by a large conformational change upon photoexcitation, or via an alternative electron transport that involves small metabolites, including NADPH, NADH, and ATP. The half-life of the activated signaling state is about 5 minutes. Also involved in the detection of blue/green ratio in light (shade under leaf canopies) and subsequent adaptations on plant growth and development. In darkness, the dark reoxidation of flavin occurs and leads to inactivated state. Perceives low blue light (LBL) and responds by directly contacting two bHLH transcription factors, PIF4 and PIF5, at chromatin on E-box variant 5'-CA[CT]GTG-3' to promote their activity and stimulate specific gene expression to adapt global physiology (e.g. hypocotyl elongation and hyponastic growth in low blue light). When activated by high-intensity blue light, catalyzes direct enzymatic conversion of molecular oxygen O(2) to reactive oxygen species (ROS) and hydrogen peroxide H(2)O(2) in vitro. ROS accumulation upon activation by blue light leads to cell death in protoplasts. Seems essential for blue-light-triggered and singlet oxygen-mediated programmed cell death (PCD). Required for the induction of nuclear genes encoding photoprotective components by GATA24 and GATA28 in extreme light intensities that exceed the electron utilization capacity of the chloroplast. Involved in shortening the circadian clock period, especially at 27 degrees Celsius, in blue light (BL) and required to maintain clock genes expression rhythm. Mediates blue light-induced gene expression and hypocotyl elongation through the inhibition of COP1-mediated degradation of the transcription factors BIT1 and HY5 and via the activation of anion channels at the plasma membrane, probably via auxin signaling. Required for the hypocotyl hook formation in darkness. Involved in blue light-dependent stomatal opening, CHS gene expression, transpiration, inhibition of stem growth and increase of root growth, probably by regulating abscisic acid (ABA). Prevents lateral roots growth by inhibiting auxin transport. Necessary for shade avoidance syndrome (SAS), characterized by leaf hyponasty and reduced lamina/petiole ratio, when exposed to blue light attenuation. Together with phototropins, involved in phototropism regulation by various blue light fluence; blue light attenuates phototropism in high fluence rates (100 umol.m-2.s-1) but enhances phototropism in low fluence rates (&lt;1.0 umol.m-2.s-1). Required for blue/UV-A wavelengths-mediated inhibition of explants shoot regeneration in vitro (e.g. new shoot apical meristems regeneration from excised cotyledons). Modulates anthocyanin accumulation in a PHYA-dependent manner in far-red-light. Acts as a PHYA/PHYB-dependent modulator of chlorophyll accumulation in red light. Contributes to most blue light deetiolation responses. May act as a chemical magnetoreceptor, via magnetically sensitive kinetics and quantum yields of photo-induced flavin / tryptophan radical pairs. The effect of near-null magnetic field on flowering is altered by changes of blue light cycle and intensity in a CRY1/CRY2-dependent manner. Involved in the strigolactone signaling that regulates hypocotyl growth in response to blue light. Modulates temperature-dependent growth and physiology maintenance, especially at warm ambient temperatures (e.g. 27 degrees Celsius) and in white light and low-light conditions, via HFR1-dependent activity; this process requires PTAC12/HMR/PAP5 (transcriptional transactivator). Implicated in promoting R protein-mediated resistance to Pseudomonas syringae pv. tomato (Pst.) DC3000 under continuous light conditions. Promotes systemic acquired resistance (SAR) and PR gene expression triggered by P.syringae. The protein is Cryptochrome-1 of Arabidopsis thaliana (Mouse-ear cress).